A 111-amino-acid polypeptide reads, in one-letter code: Distal membrane-arm assembly complex protein 1 (111 aa).

The span at 1 to 11 (MGSSFSGSTEF) shows a compositional bias: polar residues. Residues 1–40 (MGSSFSGSTEFSAPAPPTVSTAVPANPPAKSAVPASPARD) are disordered. Positions 18 to 38 (TVSTAVPANPPAKSAVPASPA) are enriched in low complexity. Transmembrane regions (helical) follow at residues 51 to 68 (VLSG…YLVA) and 81 to 101 (GTVL…VVLV).

As to quaternary structure, interacts with incompletely assembled mitochondrial NADH:ubiquinone oxidoreductase complex (complex I).

The protein resides in the mitochondrion inner membrane. Functionally, required for the assembly of the mitochondrial NADH:ubiquinone oxidoreductase complex (complex I). Involved in the assembly of the distal region of complex I. The sequence is that of Distal membrane-arm assembly complex protein 1 from Mus musculus (Mouse).